The sequence spans 409 residues: Immunity-related GTPase family M protein 1 (409 aa).

One can recognise an IRG-type G domain in the interval 75–251; the sequence is IPVSIFVTGD…PKLRDTLHKD (177 aa). Residues 84–91, 109–113, and 191–193 each bind GTP; these read DSGNGMSS, TGVVR, and KLD. Serine 202 is modified (phosphoserine). Position 232–234 (232–234) interacts with GTP; the sequence is SSL. Lysine 270 participates in a covalent cross-link: Glycyl lysine isopeptide (Lys-Gly) (interchain with G-Cter in ubiquitin). Residues 350–374 form an alpha-K amphipathic helix region; it reads KLRLMTCAIVNAFFRLLRFLPCVCC.

It belongs to the TRAFAC class dynamin-like GTPase superfamily. IRG family. As to quaternary structure, interacts with ULK1; promoting the coassembly of ULK1 and BECN1. Interacts with BECN1; enhancing BECN1-interacting partners and influencing the composition of the BECN1 complex. Interacts with ATG16L1. Interacts with NOD2; promoting Irgm1 'Lys-63'-linked polyubiquitination, which is required for interactions with the core autophagy factors. Interacts with STX17; promoting STX17 recruitment to autophagosomes. Interacts with ATG8 proteins (GABARAP, GABARAPL1, GABARAPL2, MAP1LC3A, MAP1LC3B and MAP1LC3C); promoting STX17 recruitment to autophagosomes. Interacts with TFEB; promoting association between TFEB and PPP3CB and TFEB dephosphorylation. Interacts with PPP3CB; promoting association between TFEB and PPP3CB and TFEB dephosphorylation. Interacts with NLRP3; preventing NLRP3 inflammasome assembly and promoting SQSTM1/p62-dependent autophagic degradation of NLRP3. Interacts with CGAS; promoting SQSTM1/p62-dependent autophagic degradation of CGAS. Interacts with RIGI/RIG-I; promoting SQSTM1/p62-dependent autophagic degradation of RIGI/RIG-I. Interacts with NOD1; promoting SQSTM1/p62-dependent autophagic degradation of RIGI/RIG-I. Interacts with NOD2; promoting SQSTM1/p62-dependent autophagic degradation of RIGI/RIG-I. Interacts with RIPK2; promoting SQSTM1/p62-dependent autophagic degradation of RIGI/RIG-I. Interacts with PIK3CA. In terms of processing, palmitoylated on C-terminal Cys residues. Palmitoylation, together with the alpha-K amphipathic helix, which binds phosphatidylinositol, mediate binding to membranes. Ubiquitinated via 'Lys-63'-linked polyubiquitination in a NOD2-dependent process. 'Lys-63'-linked polyubiquitination is required for interactions with the core autophagy factors. Ubiquitination at Lys-270 by the DCX(WDR77) complex, also named CLR4(WDR77) complex, in intestinal cells, leading to its degradation by the proteasome. Expressed in lung and primary macrophages.

The protein resides in the golgi apparatus membrane. Its subcellular location is the cell membrane. It localises to the cytoplasmic vesicle. It is found in the phagosome membrane. The protein localises to the autophagosome membrane. The protein resides in the lysosome membrane. Its subcellular location is the late endosome membrane. It localises to the mitochondrion membrane. It is found in the lipid droplet. The protein localises to the cell projection. The protein resides in the phagocytic cup. The enzyme catalyses GTP + H2O = GDP + phosphate + H(+). In terms of biological role, immunity-related GTPase that plays important roles in innate immunity and inflammatory response. Acts as a dynamin-like protein that binds to intracellular membranes and promotes remodeling and trafficking of those membranes. Required for clearance of acute protozoan and bacterial infections by interacting with autophagy and lysosome regulatory proteins, thereby promoting the fusion of phagosomes with lysosomes for efficient degradation of cargo including microbes. Regulates selective autophagy, including xenophagy and mitophagy, both directly and indirectly. Directly regulates autophagy by acting as a molecular adapter that promotes the coassembly of the core autophagy machinery to mediate antimicrobial defense: Irgm1 (1) activates AMPK, which in turn phosphorylates ULK1 and BECN1 to induce autophagy, (2) promotes the coassembly of ULK1 and BECN1, enhancing BECN1-interacting partners and (3) influences the composition of the BECN1 complex, by competing with the negative regulators BCL2 and RUBCN, to trigger autophagy. Also activates autophagy by promoting recruitment of STX17 to autophagosomes. In collaboration with ATG8 proteins, regulate lysosomal biogenesis, a fundamental process for any autophagic pathway, by promoting TFEB dephosphorylation. Also modulates autophagy by assisting with autophagosome formation and preventing lysosomal deacidification. Regulates autophagy by affecting mitochondrial fusion and fission. Also involved in M1 macrophage activation for the production of proinflammatory cytokines. While activating autophagy, acts as a key negative regulator of the inflammatory and interferon responses both by (1) promoting mitophagy and (2) mediating autophagy-dependent degradation of effectors of the inflammatory response. Promotes degradation of damaged and IFNG/IFN-gamma-stressed mitochondria via mitophagy, preventing cytosolic release of ligands that activate inflammation. Negatively regulates interferon-signaling in hematopoietic stem cells, preserving hematopoietic stem cell number and function. Promotes expansion of activated CD4(+) T-cells by inhibiting IFNG/IFN-gamma signaling, thereby preventing Ifng-mediated cell death of CD4(+) T-cells. Acts as a suppressor of inflammation by promoting recruitment of inflammation effectors, such as CGAS, RIGI/RIG-I and NLRP3, to autophagosome membranes, leading to their SQSTM1/p62-dependent autophagic degradation. Also directly inhibits assembly of the NLRP3 inflammasome by preventing the association between NLRP3 and PYCARD. Acts as a negative regulator of antiviral innate immune response by suppressing the RIPK2-dependent pro-inflammatory response: mediates recruitment of RIPosomes, composed of RIPK2 and NOD1 or NOD2, to autophagosome membranes, promoting their SQSTM1/p62-dependent autophagic degradation. The protein is Immunity-related GTPase family M protein 1 of Mus musculus (Mouse).